A 119-amino-acid polypeptide reads, in one-letter code: Large ribosomal subunit protein bL20 (119 aa).

Belongs to the bacterial ribosomal protein bL20 family.

Functionally, binds directly to 23S ribosomal RNA and is necessary for the in vitro assembly process of the 50S ribosomal subunit. It is not involved in the protein synthesizing functions of that subunit. The protein is Large ribosomal subunit protein bL20 of Streptococcus uberis (strain ATCC BAA-854 / 0140J).